Here is a 264-residue protein sequence, read N- to C-terminus: ATP synthase subunit a (264 aa).

Helical transmembrane passes span 29 to 49 (TWHI…LWIF), 90 to 110 (IAPL…MDMI), 111 to 131 (PVDW…KVVP), 134 to 154 (DVNI…YYSI), 177 to 197 (IPVN…SLAL), 208 to 228 (LIFI…TLGV), and 235 to 255 (LIFH…LTIV).

This sequence belongs to the ATPase A chain family. As to quaternary structure, F-type ATPases have 2 components, CF(1) - the catalytic core - and CF(0) - the membrane proton channel. CF(1) has five subunits: alpha(3), beta(3), gamma(1), delta(1), epsilon(1). CF(0) has three main subunits: a(1), b(2) and c(9-12). The alpha and beta chains form an alternating ring which encloses part of the gamma chain. CF(1) is attached to CF(0) by a central stalk formed by the gamma and epsilon chains, while a peripheral stalk is formed by the delta and b chains.

It localises to the cell inner membrane. Its function is as follows. Key component of the proton channel; it plays a direct role in the translocation of protons across the membrane. In Shewanella denitrificans (strain OS217 / ATCC BAA-1090 / DSM 15013), this protein is ATP synthase subunit a.